The sequence spans 195 residues: Imidazoleglycerol-phosphate dehydratase (195 aa).

It belongs to the imidazoleglycerol-phosphate dehydratase family.

The protein localises to the cytoplasm. It carries out the reaction D-erythro-1-(imidazol-4-yl)glycerol 3-phosphate = 3-(imidazol-4-yl)-2-oxopropyl phosphate + H2O. Its pathway is amino-acid biosynthesis; L-histidine biosynthesis; L-histidine from 5-phospho-alpha-D-ribose 1-diphosphate: step 6/9. The sequence is that of Imidazoleglycerol-phosphate dehydratase from Bordetella avium (strain 197N).